A 173-amino-acid chain; its full sequence is MENHVSLKVVSPALYYAIQDLRAHTNNFLKNQKMKPLSPGHYIIQPSANSKVRSLITKQQHPRKVTLPCNCHFTIHHECNRGFSHRGTYYSPSGNKFRGIRECTESTVYETPMVREIRANLSTEDTNPIQLQPPESVESSQVLDRANDNRIEQDIDWTPFLEGLEKETRDILG.

The segment at 69–85 (CNCHFTIHHECNRGFSH) is a zinc-finger region.

The protein belongs to the geminiviridae transcriptional activator protein family. As to quaternary structure, monomer. Interacting with and inactivating host adenosine kinase 2 (ADK2) in the cytoplasm. Interacts with and inhibits host SNF1 kinase.

Its subcellular location is the host cytoplasm. Its function is as follows. Acts as a suppressor of RNA-mediated gene silencing, also known as post-transcriptional gene silencing (PTGS), a mechanism of plant viral defense that limits the accumulation of viral RNAs. Suppresses the host RNA silencing by inhibiting adenosine kinase 2 (ADK2), a kinase involved in a general methylation pathway. Also suppresses the host basal defense by interacting with and inhibiting SNF1 kinase, a key regulator of cell metabolism implicated in innate antiviral defense. Determines pathogenicity. The sequence is that of Protein C2 from Beet curly top virus (strain California/Logan) (BCTV).